Reading from the N-terminus, the 717-residue chain is PAN2-PAN3 deadenylation complex subunit PAN3 (717 aa).

The C3H1-type zinc finger occupies 8–37 (WARDVPCRNVIIYGFCKKKTEGCPFKHDDD). The segment at 37–100 (DDIATPTSTP…HTGSKSQVPK (64 aa)) is disordered. The span at 62 to 90 (PSKISVSSLPSLNSQPSSTAPTSAPNATA) shows a compositional bias: low complexity. The span at 91 to 100 (HTGSKSQVPK) shows a compositional bias: polar residues. Residues 323 to 585 (QLFPSGGNLP…ATIIEKYIGL (263 aa)) are pseudokinase domain. ATP contacts are provided by residues arginine 378, 428–435 (DYYPNATS), and 482–483 (DK). Residues 586–624 (DVVFKVMEAQQTYSEYAENVLSRELENGRLFRLICKLNF) are a coiled coil. The interval 625–717 (IFGRVENRLD…VDKTFRAMTL (93 aa)) is knob domain.

This sequence belongs to the protein kinase superfamily. PAN3 family. In terms of assembly, homodimer. Forms a heterotrimer with a catalytic subunit PAN2 to form the poly(A)-nuclease (PAN) deadenylation complex. Interacts (via PAM-2 motif) with poly(A)-binding protein PAB1 (via PABC domain), conferring substrate specificity of the enzyme complex.

The protein localises to the cytoplasm. Its function is as follows. Regulatory subunit of the poly(A)-nuclease (PAN) deadenylation complex, one of two cytoplasmic mRNA deadenylases involved in mRNA turnover. PAN specifically shortens poly(A) tails of RNA and the activity is stimulated by poly(A)-binding protein PAB1. PAN deadenylation is followed by rapid degradation of the shortened mRNA tails by the CCR4-NOT complex. Deadenylated mRNAs are then degraded by two alternative mechanisms, namely exosome-mediated 3'-5' exonucleolytic degradation, or deadenylation-dependent mRNA decaping and subsequent 5'-3' exonucleolytic degradation by XRN1. May also be involved in post-transcriptional maturation of mRNA poly(A) tails. PAN3 acts as a positive regulator for PAN activity, recruiting the catalytic subunit PAN2 to mRNA via its interaction with RNA and with PAB1. The polypeptide is PAN2-PAN3 deadenylation complex subunit PAN3 (Candida glabrata (strain ATCC 2001 / BCRC 20586 / JCM 3761 / NBRC 0622 / NRRL Y-65 / CBS 138) (Yeast)).